The primary structure comprises 351 residues: Formyl peptide receptor 2 (351 aa).

Residues 1 to 29 (MESNYSIHLNGSEVVVYDSTISRVLWILS) lie on the Extracellular side of the membrane. Asn-4 and Asn-10 each carry an N-linked (GlcNAc...) asparagine glycan. The chain crosses the membrane as a helical span at residues 30–50 (MVVVSITFFLGVLGNGLVIWV). The Cytoplasmic portion of the chain corresponds to 51-61 (AGFRMPHTVTT). The chain crosses the membrane as a helical span at residues 62-82 (IWYLNLALADFSFTATLPFLL). Residues 83 to 99 (VEMAMKEKWPFGWFLCK) lie on the Extracellular side of the membrane. Cys-98 and Cys-176 form a disulfide bridge. A helical transmembrane segment spans residues 100–120 (LVHIVVDVNLFGSVFLIALIA). The Cytoplasmic portion of the chain corresponds to 121–144 (LDRCICVLHPVWAQNHRTVSLARK). The chain crosses the membrane as a helical span at residues 145–165 (VVVGPWIFALILTLPIFIFLT). Residues 166-205 (TVRIPGGDVYCTFNFGSWAQTDEEKLNTAITFVTTRGIIR) are Extracellular-facing. A helical membrane pass occupies residues 206 to 226 (FLIGFSMPMSIVAVCYGLIAV). Residues 227-241 (KINRRNLVNSSRPLR) lie on the Cytoplasmic side of the membrane. The helical transmembrane segment at 242–262 (VLTAVVASFFICWFPFQLVAL) threads the bilayer. Residues 263 to 282 (LGTVWFKETLLSGSYKILDM) lie on the Extracellular side of the membrane. Residues 283–305 (FVNPTSSLAYFNSCLNPMLYVFM) traverse the membrane as a helical segment. Residues 306–351 (GQDFRERFIHSLPYSLERALSEDSGQTSDSSTSSTSPPADIELKAP) lie on the Cytoplasmic side of the membrane. The disordered stretch occupies residues 325–351 (LSEDSGQTSDSSTSSTSPPADIELKAP). Over residues 327 to 341 (EDSGQTSDSSTSSTS) the composition is skewed to low complexity.

It belongs to the G-protein coupled receptor 1 family. As to quaternary structure, interacts with Amyloid-beta protein 42, product of APP; the interaction takes place at the cell surface and the complex is then rapidly internalized. As to expression, primarily expressed in neutrophils. Not detected in vomeronasal neurons.

It localises to the cell membrane. Its function is as follows. High affinity receptor for N-formyl-methionyl peptides (FMLP), which are powerful neutrophil chemotactic factors. Stimulates chemotaxis in immune cells to site of infection or tissue damage upon recognition of several ligands, such as FMLP, or ligand involved in cell damage, disease or inflammation. Receptor for the chemokine-like protein FAM19A5, mediating FAM19A5-stimulated macrophage chemotaxis and the inhibitory effect on TNFSF11/RANKL-induced osteoclast differentiation. This chain is Formyl peptide receptor 2 (Fpr2), found in Mus musculus (Mouse).